Consider the following 148-residue polypeptide: Lipid droplet organization protein LDO16 (148 aa).

Topologically, residues Met1–Phe7 are cytoplasmic. The chain crosses the membrane as a helical span at residues Phe8–Ile28. Residue Pro29 is a topological domain, lumenal. Residues Leu30–Met50 traverse the membrane as a helical segment. The Cytoplasmic segment spans residues Ser51 to Ser148. The disordered stretch occupies residues Gln83–Pro110. Polar residues predominate over residues Arg93–Arg109. A Phosphoserine modification is found at Ser102.

This sequence belongs to the OSW5 family. In terms of assembly, interacts specifically with the seipin complex FLD1-LDB16. Only a fraction appears to associate with the seipin core components, suggesting that it may be an ancillary subunit of the complex. Found to interact with many mitochondrial and peroxisomal proteins.

The protein resides in the endoplasmic reticulum membrane. It localises to the lipid droplet. In terms of biological role, involved in lipid droplet (LD) organization. Functions primarily upon nutrient depletion, facilitating LD consumption by lipophagy. Required for correct LD distribution during entry into stationary phase, where LDs accumulate at nucleus-vacuole junction (NVJ) contact sites. Involved in membrane interaction in a manner similar to those of SNARE proteins, binding to partners present in mitochondria or peroxisomes. Its partner on the mitochondrion side might be TOM22, a mitochondrial outer membrane protein, linking lipid droplets and mitochondria by protein-protein interaction. Involved in spore wall assembly. This chain is Lipid droplet organization protein LDO16, found in Saccharomyces cerevisiae (strain ATCC 204508 / S288c) (Baker's yeast).